The chain runs to 330 residues: MTPDWHSSLILTAYILIFLTGLPANLLALRAFMGRVRQPQPAPVHILLLNLTLADLLLLLLLPFRIVEAASNFRWYLPKIVCALTGFGFYSSIYCSTWLLAGISMERYLGVAFPVQYKLSRRPLYGVIAALVAWIMSFGHCTIVIIVQYLNSTEQVGTENQITCYENFTQEQLDVVLPVRLELCLVLFFVPMAVTIFCYWRFVWIMLTQPHVGAQRRRRAVGLAVVTLLNFLVCFGPYNMSHLVGFYLRQSPSWRVEAVVFSSLNASLDPLLFYFSSSVVRRAFGKGLLLIRNPASSMLGRGAKETVEGTKMDRGGSQAEGVQSSEFVTE.

Residues 1–8 (MTPDWHSS) are Extracellular-facing. A helical transmembrane segment spans residues 9–29 (LILTAYILIFLTGLPANLLAL). Topologically, residues 30 to 43 (RAFMGRVRQPQPAP) are cytoplasmic. Residues 44-64 (VHILLLNLTLADLLLLLLLPF) traverse the membrane as a helical segment. Over 65–79 (RIVEAASNFRWYLPK) the chain is Extracellular. A helical transmembrane segment spans residues 80–100 (IVCALTGFGFYSSIYCSTWLL). At 101-126 (AGISMERYLGVAFPVQYKLSRRPLYG) the chain is on the cytoplasmic side. Residues 127 to 147 (VIAALVAWIMSFGHCTIVIIV) traverse the membrane as a helical segment. The Extracellular portion of the chain corresponds to 148 to 184 (QYLNSTEQVGTENQITCYENFTQEQLDVVLPVRLELC). 2 N-linked (GlcNAc...) asparagine glycosylation sites follow: N151 and N167. A helical membrane pass occupies residues 185–205 (LVLFFVPMAVTIFCYWRFVWI). Residues 206 to 219 (MLTQPHVGAQRRRR) lie on the Cytoplasmic side of the membrane. Residues 220–240 (AVGLAVVTLLNFLVCFGPYNM) form a helical membrane-spanning segment. At 241–255 (SHLVGFYLRQSPSWR) the chain is on the extracellular side. Residues 256 to 276 (VEAVVFSSLNASLDPLLFYFS) traverse the membrane as a helical segment. At 277 to 330 (SSVVRRAFGKGLLLIRNPASSMLGRGAKETVEGTKMDRGGSQAEGVQSSEFVTE) the chain is on the cytoplasmic side. The interval 306–330 (TVEGTKMDRGGSQAEGVQSSEFVTE) is disordered. Over residues 320-330 (EGVQSSEFVTE) the composition is skewed to polar residues.

Belongs to the G-protein coupled receptor 1 family. In terms of assembly, interacts with FCN1 (via Fibrinogen C-terminal domain). As to expression, highly expressed in hematopoietic tissues, such as spleen and bone marrow, with highest levels in a subset of immune cells, including monocytes or neutrophils. Expressed in adipose tissues with high expression in differentiating adipocytes. Expressed by intestinal endocrine cells.

It localises to the cell membrane. In terms of biological role, g protein-coupled receptor that is activated by a major product of dietary fiber digestion, the short chain fatty acids (SCFAs), and that plays a role in the regulation of whole-body energy homeostasis and in intestinal immunity. In omnivorous mammals, the short chain fatty acids acetate, propionate and butyrate are produced primarily by the gut microbiome that metabolizes dietary fibers. SCFAs serve as a source of energy but also act as signaling molecules. That G protein-coupled receptor is probably coupled to the pertussis toxin-sensitive, G(i/o)-alpha family of G proteins but also to the Gq family. Its activation results in the formation of inositol 1,4,5-trisphosphate, the mobilization of intracellular calcium, the phosphorylation of the MAPK3/ERK1 and MAPK1/ERK2 kinases and the inhibition of intracellular cAMP accumulation. May play a role in glucose homeostasis by regulating the secretion of GLP-1, in response to short-chain fatty acids accumulating in the intestine. May also regulate the production of LEP/Leptin, a hormone acting on the central nervous system to inhibit food intake. Finally, may also regulate whole-body energy homeostasis through adipogenesis regulating both differentiation and lipid storage of adipocytes. In parallel to its role in energy homeostasis, may also mediate the activation of the inflammatory and immune responses by SCFA in the intestine, regulating the rapid production of chemokines and cytokines. May also play a role in the resolution of the inflammatory response and control chemotaxis in neutrophils. In addition to SCFAs, may also be activated by the extracellular lectin FCN1 in a process leading to activation of monocytes and inducing the secretion of interleukin-8/IL-8 in response to the presence of microbes. This chain is Free fatty acid receptor 2 (Ffar2), found in Mus musculus (Mouse).